A 713-amino-acid chain; its full sequence is Serine/threonine-protein kinase SSN3 (713 aa).

The Protein kinase domain occupies Tyr66 to Phe484. Leu72–Val80 is a binding site for ATP. Positions Asn104 to Thr120 are enriched in low complexity. A disordered region spans residues Asn104 to Ser188. Residues Gln129 to His142 show a composition bias toward polar residues. Positions Gly158–Ala175 are enriched in low complexity. Lys201 contacts ATP. Asp304 acts as the Proton acceptor in catalysis. Over residues Ser657–Glu672 the composition is skewed to polar residues. A disordered region spans residues Ser657–Asn713. Residues Ser673–Pro691 are compositionally biased toward low complexity. Residues Arg694–Asn705 are compositionally biased toward polar residues.

This sequence belongs to the protein kinase superfamily. CMGC Ser/Thr protein kinase family. CDC2/CDKX subfamily. Component of the srb8-11 complex, a regulatory module of the Mediator complex. The cofactor is Mg(2+).

It is found in the nucleus. The catalysed reaction is L-seryl-[protein] + ATP = O-phospho-L-seryl-[protein] + ADP + H(+). The enzyme catalyses L-threonyl-[protein] + ATP = O-phospho-L-threonyl-[protein] + ADP + H(+). It carries out the reaction [DNA-directed RNA polymerase] + ATP = phospho-[DNA-directed RNA polymerase] + ADP + H(+). In terms of biological role, component of the srb8-11 complex. The srb8-11 complex is a regulatory module of the Mediator complex which is itself dependent transcription. The srb8-11 complex may be involved in the transcriptional repression of a subset of genes regulated by Mediator. It may inhibit the association of the Mediator complex with RNA polymerase II to form the holoenzyme complex. The srb8-11 complex phosphorylates the C-terminal domain (CTD) of the largest subunit of RNA polymerase II. The protein is Serine/threonine-protein kinase SSN3 (SSN3) of Mycosarcoma maydis (Corn smut fungus).